The primary structure comprises 85 residues: Large ribosomal subunit protein bL27 (85 aa).

This sequence belongs to the bacterial ribosomal protein bL27 family.

The chain is Large ribosomal subunit protein bL27 from Xylella fastidiosa (strain 9a5c).